A 787-amino-acid polypeptide reads, in one-letter code: Endonuclease MutS2 (787 aa).

335–342 (GPNTGGKT) is an ATP binding site. In terms of domain architecture, Smr spans 712-787 (LDLRGERYED…GLGNTVIELK (76 aa)).

It belongs to the DNA mismatch repair MutS family. MutS2 subfamily. Homodimer. Binds to stalled ribosomes, contacting rRNA.

Functionally, endonuclease that is involved in the suppression of homologous recombination and thus may have a key role in the control of bacterial genetic diversity. Its function is as follows. Acts as a ribosome collision sensor, splitting the ribosome into its 2 subunits. Detects stalled/collided 70S ribosomes which it binds and splits by an ATP-hydrolysis driven conformational change. Acts upstream of the ribosome quality control system (RQC), a ribosome-associated complex that mediates the extraction of incompletely synthesized nascent chains from stalled ribosomes and their subsequent degradation. Probably generates substrates for RQC. The polypeptide is Endonuclease MutS2 (Shouchella clausii (strain KSM-K16) (Alkalihalobacillus clausii)).